The following is a 246-amino-acid chain: Ly6/PLAUR domain-containing protein 4 (246 aa).

An N-terminal signal peptide occupies residues 1 to 26 (MILQAWRSLQLLYLLEAISLLPCTEA). Asn117 carries N-linked (GlcNAc...) asparagine glycosylation. The UPAR/Ly6 domain maps to 142–223 (CPSCVGKHDQ…INVLDKSEAV (82 aa)). Ala225 carries GPI-anchor amidated alanine lipidation. Positions 226–246 (GHCSQGISWSVLLCLLILLRD) are cleaved as a propeptide — removed in mature form.

Its subcellular location is the cell membrane. This Mus musculus (Mouse) protein is Ly6/PLAUR domain-containing protein 4 (Lypd4).